The sequence spans 103 residues: Pyrimidine/purine nucleoside phosphorylase (103 aa).

The protein belongs to the nucleoside phosphorylase PpnP family.

It carries out the reaction a purine D-ribonucleoside + phosphate = a purine nucleobase + alpha-D-ribose 1-phosphate. It catalyses the reaction adenosine + phosphate = alpha-D-ribose 1-phosphate + adenine. The catalysed reaction is cytidine + phosphate = cytosine + alpha-D-ribose 1-phosphate. The enzyme catalyses guanosine + phosphate = alpha-D-ribose 1-phosphate + guanine. It carries out the reaction inosine + phosphate = alpha-D-ribose 1-phosphate + hypoxanthine. It catalyses the reaction thymidine + phosphate = 2-deoxy-alpha-D-ribose 1-phosphate + thymine. The catalysed reaction is uridine + phosphate = alpha-D-ribose 1-phosphate + uracil. The enzyme catalyses xanthosine + phosphate = alpha-D-ribose 1-phosphate + xanthine. Functionally, catalyzes the phosphorolysis of diverse nucleosides, yielding D-ribose 1-phosphate and the respective free bases. Can use uridine, adenosine, guanosine, cytidine, thymidine, inosine and xanthosine as substrates. Also catalyzes the reverse reactions. In Shewanella sp. (strain MR-4), this protein is Pyrimidine/purine nucleoside phosphorylase.